The chain runs to 514 residues: 1,25-dihydroxyvitamin D(3) 24-hydroxylase, mitochondrial (514 aa).

A mitochondrion-targeting transit peptide spans 1 to 35 (MSCPIDKRRTLIAFLRRLRDLGQPPRSVTSKASAS). Cysteine 462 provides a ligand contact to heme.

The protein belongs to the cytochrome P450 family. It depends on heme as a cofactor.

The protein localises to the mitochondrion. It carries out the reaction calcitriol + 2 reduced [adrenodoxin] + O2 + 2 H(+) = calcitetrol + 2 oxidized [adrenodoxin] + H2O. The enzyme catalyses calcitetrol + 2 reduced [adrenodoxin] + O2 + 2 H(+) = (1S)-1,25-dihydroxy-24-oxocalciol + 2 oxidized [adrenodoxin] + 2 H2O. The catalysed reaction is (1S)-1,25-dihydroxy-24-oxocalciol + 2 reduced [adrenodoxin] + O2 + 2 H(+) = (1S)-1,23,25-trihydroxy-24-oxocalciol + 2 oxidized [adrenodoxin] + H2O. It catalyses the reaction (1S)-1,23-dihydroxy-24,25,26,27-tetranorcalciol + 2 reduced [adrenodoxin] + O2 + 2 H(+) = (1S)-1-hydroxy-23-oxo-24,25,26,27-tetranorcalciol + 2 oxidized [adrenodoxin] + 2 H2O. It carries out the reaction (1S)-1-hydroxy-23-oxo-24,25,26,27-tetranorcalciol + 2 reduced [adrenodoxin] + O2 + H(+) = calcitroate + 2 oxidized [adrenodoxin] + H2O. The enzyme catalyses calcidiol + 2 reduced [adrenodoxin] + O2 + 2 H(+) = secalciferol + 2 oxidized [adrenodoxin] + H2O. The catalysed reaction is secalciferol + 2 reduced [adrenodoxin] + O2 + 2 H(+) = 25-hydroxy-24-oxocalciol + 2 oxidized [adrenodoxin] + 2 H2O. It catalyses the reaction 25-hydroxy-24-oxocalciol + 2 reduced [adrenodoxin] + O2 + 2 H(+) = 23S,25-dihydroxy-24-oxocholecalciferol + 2 oxidized [adrenodoxin] + H2O. It carries out the reaction 20S,23-dihydroxycholecalciferol + 2 reduced [adrenodoxin] + O2 + 2 H(+) = 20S,23,25-trihydroxycholecalciferol + 2 oxidized [adrenodoxin] + H2O. The enzyme catalyses 20S,23-dihydroxycholecalciferol + 2 reduced [adrenodoxin] + O2 + 2 H(+) = 20S,23,24-trihydroxycholecalciferol + 2 oxidized [adrenodoxin] + H2O. The catalysed reaction is 20S-hydroxycholecalciferol + 2 reduced [adrenodoxin] + O2 + 2 H(+) = 20S,25-dihydroxycholecalciferol + 2 oxidized [adrenodoxin] + H2O. It catalyses the reaction 20S-hydroxycholecalciferol + 2 reduced [adrenodoxin] + O2 + 2 H(+) = 20S,24S-dihydroxycholecalciferol + 2 oxidized [adrenodoxin] + H2O. It carries out the reaction 20S-hydroxycholecalciferol + 2 reduced [adrenodoxin] + O2 + 2 H(+) = 20S,24R-dihydroxycholecalciferol + 2 oxidized [adrenodoxin] + H2O. Functionally, a cytochrome P450 monooxygenase with a key role in vitamin D catabolism and calcium homeostasis. Via C24-oxidation pathway, catalyzes the inactivation of both the vitamin D precursor calcidiol (25-hydroxyvitamin D(3)) and the active hormone calcitriol (1-alpha,25-dihydroxyvitamin D(3)). With initial hydroxylation at C-24 (via C24-oxidation pathway), performs a sequential 6-step oxidation of calcitriol leading to the formation of the biliary metabolite calcitroic acid. Hydroxylates at C-24 or C-25 other vitamin D active metabolites, such as CYP11A1-derived secosteroids 20S-hydroxycholecalciferol and 20S,23-dihydroxycholecalciferol. Mechanistically, uses molecular oxygen inserting one oxygen atom into a substrate, and reducing the second into a water molecule, with two electrons provided by NADPH via FDXR/adrenodoxin reductase and FDX1/adrenodoxin. The chain is 1,25-dihydroxyvitamin D(3) 24-hydroxylase, mitochondrial (Cyp24a1) from Rattus norvegicus (Rat).